A 358-amino-acid polypeptide reads, in one-letter code: Phospho-N-acetylmuramoyl-pentapeptide-transferase (358 aa).

The next 10 helical transmembrane spans lie at 26–46 (AIYA…WLID), 70–90 (GTPT…TLLW), 94–114 (TNVY…VGFV), 134–154 (MLWL…YPPF), 169–189 (ELGL…SNAV), 197–217 (GLAI…AYLA), 234–254 (AGEL…FLWF), 261–281 (VFMG…IAVI), 286–306 (IVLV…IVQV), and 335–355 (KIIV…LSTL).

Belongs to the glycosyltransferase 4 family. MraY subfamily. Requires Mg(2+) as cofactor.

It is found in the cell inner membrane. It catalyses the reaction UDP-N-acetyl-alpha-D-muramoyl-L-alanyl-gamma-D-glutamyl-meso-2,6-diaminopimeloyl-D-alanyl-D-alanine + di-trans,octa-cis-undecaprenyl phosphate = di-trans,octa-cis-undecaprenyl diphospho-N-acetyl-alpha-D-muramoyl-L-alanyl-D-glutamyl-meso-2,6-diaminopimeloyl-D-alanyl-D-alanine + UMP. Its pathway is cell wall biogenesis; peptidoglycan biosynthesis. In terms of biological role, catalyzes the initial step of the lipid cycle reactions in the biosynthesis of the cell wall peptidoglycan: transfers peptidoglycan precursor phospho-MurNAc-pentapeptide from UDP-MurNAc-pentapeptide onto the lipid carrier undecaprenyl phosphate, yielding undecaprenyl-pyrophosphoryl-MurNAc-pentapeptide, known as lipid I. In Syntrophotalea carbinolica (strain DSM 2380 / NBRC 103641 / GraBd1) (Pelobacter carbinolicus), this protein is Phospho-N-acetylmuramoyl-pentapeptide-transferase.